We begin with the raw amino-acid sequence, 124 residues long: uncharacterized protein (124 aa).

The 77-residue stretch at Asp42–Ile118 folds into the GIY-YIG domain.

This is an uncharacterized protein from Bacillus subtilis (strain 168).